A 126-amino-acid chain; its full sequence is Methylglyoxal synthase (126 aa).

One can recognise an MGS-like domain in the interval 1 to 126 (MAGGKCIALI…AERLIKTLNH (126 aa)). Substrate-binding positions include H12, K16, 38 to 41 (TGTT), and 59 to 60 (SG). The active-site Proton donor/acceptor is the D65. Substrate is bound at residue H92.

Belongs to the methylglyoxal synthase family.

It catalyses the reaction dihydroxyacetone phosphate = methylglyoxal + phosphate. Its function is as follows. Catalyzes the formation of methylglyoxal from dihydroxyacetone phosphate. In Rhizobium rhizogenes (strain K84 / ATCC BAA-868) (Agrobacterium radiobacter), this protein is Methylglyoxal synthase.